The chain runs to 370 residues: Homospermidine synthase 1 (370 aa).

This sequence belongs to the deoxyhypusine synthase family. Homotetramer. It depends on NAD(+) as a cofactor. In terms of processing, the N-terminus is blocked. Expressed in roots.

The enzyme catalyses putrescine + spermidine = sym-homospermidine + propane-1,3-diamine. The protein operates within alkaloid biosynthesis; pyrrolizidine alkaloid biosynthesis. In terms of biological role, catalyzes the transfer of an aminobutyl unit from spermidine onto putrescine. The resulting polyamine homospermidine is a precursor in the biosynthesis of pyrrolizidine alkaloids. The protein is Homospermidine synthase 1 (HSS1) of Senecio vernalis (Spring groundsel).